We begin with the raw amino-acid sequence, 482 residues long: Retinoic acid receptor beta (482 aa).

Residues 1 to 114 form a modulating region; the sequence is MSTSSHACPV…PLPPPRVYKP (114 aa). At serine 104 the chain carries Phosphoserine. NR C4-type zinc fingers lie at residues 115 to 135 and 151 to 175; these read CFVC…CEGC and CHRD…LQKC. Residues 115–180 constitute a DNA-binding region (nuclear receptor); sequence CFVCQDKSSG…RLQKCFEVGM (66 aa). The tract at residues 181 to 209 is hinge; that stretch reads SKESVRNDRNKKKKEPSKQECTESYEMTA. Residues 210 to 444 enclose the NR LBD domain; the sequence is ELDDLTEKIR…PLIQEMLENS (235 aa). Residues 443–482 are disordered; the sequence is NSEGHEPLTPSSSGNIAEHSPSVSPSSVENSGVSQSPLLQ. Over residues 462–482 the composition is skewed to low complexity; that stretch reads SPSVSPSSVENSGVSQSPLLQ.

The protein belongs to the nuclear hormone receptor family. NR1 subfamily. In terms of assembly, homodimer. Heterodimer; with a RXR molecule. Binds DNA preferentially as a RAR/RXR heterodimer. Heterodimerizes (via NR LBD) with RXRA. Interacts weakly with NCOR2.

It localises to the nucleus. The protein localises to the cytoplasm. Receptor for retinoic acid. Retinoic acid receptors bind as heterodimers to their target response elements in response to their ligands, all-trans or 9-cis retinoic acid, and regulate gene expression in various biological processes. The RAR/RXR heterodimers bind to the retinoic acid response elements (RARE) composed of tandem 5'-AGGTCA-3' sites known as DR1-DR5. In the absence of ligand, acts mainly as an activator of gene expression due to weak binding to corepressors. The RXRA/RARB heterodimer can act as a repressor on the DR1 element and as an activator on the DR5 element. In concert with RARG, required for skeletal growth, matrix homeostasis and growth plate function. The sequence is that of Retinoic acid receptor beta (Rarb) from Mus musculus (Mouse).